The primary structure comprises 636 residues: Cysteine-rich receptor-like protein kinase 24 (636 aa).

The N-terminal stretch at 1 to 20 (MVKFLVIFWFVVISFSHVSA) is a signal peptide. Gnk2-homologous domains lie at 21–124 (QVCL…NRSF) and 130–235 (MEIL…LYPF). Topologically, residues 21 to 254 (QVCLERSGFF…RQKDGKSIST (234 aa)) are extracellular. N-linked (GlcNAc...) asparagine glycans are attached at residues Asn33, Asn50, Asn98, Asn101, Asn121, Asn137, Asn145, and Asn197. The chain crosses the membrane as a helical span at residues 255–275 (GAIVAIIVVPILLLALGVGLW). Topologically, residues 276-636 (KRRKAYKTKT…SVSVTCVSPR (361 aa)) are cytoplasmic. The Protein kinase domain maps to 312–585 (FHNVNKLGHG…TMSTVFHMLT (274 aa)). Residues 318-326 (LGHGGFGEV) and Lys340 each bind ATP. Asp437 functions as the Proton acceptor in the catalytic mechanism.

This sequence belongs to the protein kinase superfamily. Ser/Thr protein kinase family. CRK subfamily.

The protein localises to the membrane. It catalyses the reaction L-seryl-[protein] + ATP = O-phospho-L-seryl-[protein] + ADP + H(+). The enzyme catalyses L-threonyl-[protein] + ATP = O-phospho-L-threonyl-[protein] + ADP + H(+). This chain is Cysteine-rich receptor-like protein kinase 24 (CRK24), found in Arabidopsis thaliana (Mouse-ear cress).